The following is a 131-amino-acid chain: Profilin-2 (131 aa).

An intrachain disulfide couples C13 to C115. An Involved in PIP2 interaction motif is present at residues 81 to 97 (AVIRGKKGSGGITVKKT). T111 carries the phosphothreonine modification.

This sequence belongs to the profilin family. In terms of assembly, occurs in many kinds of cells as a complex with monomeric actin in a 1:1 ratio. In terms of processing, phosphorylated by MAP kinases. Pollen specific.

The protein localises to the cytoplasm. It is found in the cytoskeleton. Functionally, binds to actin and affects the structure of the cytoskeleton. At high concentrations, profilin prevents the polymerization of actin, whereas it enhances it at low concentrations. By binding to PIP2, it inhibits the formation of IP3 and DG. The protein is Profilin-2 (PRO2) of Zea mays (Maize).